The primary structure comprises 260 residues: Alpha-acetolactate decarboxylase (260 aa).

The protein belongs to the alpha-acetolactate decarboxylase family.

The enzyme catalyses (2S)-2-acetolactate + H(+) = (R)-acetoin + CO2. Its pathway is polyol metabolism; (R,R)-butane-2,3-diol biosynthesis; (R,R)-butane-2,3-diol from pyruvate: step 2/3. In terms of biological role, converts acetolactate into acetoin. The chain is Alpha-acetolactate decarboxylase (budA) from Methylococcus capsulatus (strain ATCC 33009 / NCIMB 11132 / Bath).